Reading from the N-terminus, the 89-residue chain is Phytosulfokines 1 (89 aa).

A signal peptide spans 1 to 22 (MVNPGRTARALCLLCLALLLLG). A propeptide spanning residues 23 to 79 (QDTHSRKLLLQEKHSHGVGNGTTTTQEPSRENGGSTGSNNNGQLQFDSAKWEEFHTD) is cleaved from the precursor. The interval 33–70 (QEKHSHGVGNGTTTTQEPSRENGGSTGSNNNGQLQFDS) is disordered. An N-linked (GlcNAc...) asparagine glycan is attached at N42. Sulfotyrosine occurs at positions 80 and 82. Residues 85-89 (DVKKP) constitute a propeptide that is removed on maturation.

The protein belongs to the phytosulfokine family. Post-translationally, sulfation is important for activity and for the binding to a putative membrane receptor. PSK-alpha is produced by endopeptidase digestion. PSK-beta is produced from PSK-alpha by exopeptidase digestion. As to expression, expressed throughout the seedling. More abundant in fragments containing shoot or root apexes where cells proliferate vigorously.

Its subcellular location is the secreted. Functionally, promotes plant cell differentiation, organogenesis and somatic embryogenesis as well as cell proliferation. The polypeptide is Phytosulfokines 1 (PSK1) (Oryza sativa subsp. japonica (Rice)).